Reading from the N-terminus, the 1325-residue chain is RIMS-binding protein 2 (1325 aa).

The disordered stretch occupies residues T153 to K181. Basic and acidic residues predominate over residues S158 to S169. The 68-residue stretch at G186–D253 folds into the SH3 1 domain. Fibronectin type-III domains are found at residues V315–V408, A411–A493, and P507–S608. Disordered regions lie at residues S601–L778, D988–E1010, and A1040–M1090. Positions E627–E641 are enriched in basic and acidic residues. A compositionally biased stretch (polar residues) spans F664 to P676. Basic and acidic residues predominate over residues M696–F716. The span at S717–N727 shows a compositional bias: polar residues. Basic and acidic residues-rich tracts occupy residues C763–R774 and P996–E1010. SH3 domains lie at I1121–A1189 and V1225–D1292.

The protein belongs to the RIMBP family. In terms of assembly, interacts with RIMS1, RIMS2, CACNA1D and CACNA1B, and potentially with other Ca(2+) channel alpha-1 isoforms. In terms of tissue distribution, brain, cochlea and retina.

The protein localises to the cell membrane. It localises to the synapse. Functionally, plays a role in the synaptic transmission as bifunctional linker that interacts simultaneously with RIMS1, RIMS2, CACNA1D and CACNA1B. This Gallus gallus (Chicken) protein is RIMS-binding protein 2 (RIMBP2).